The following is a 102-amino-acid chain: Citrate lyase acyl carrier protein (102 aa).

Ser-14 bears the O-(phosphoribosyl dephospho-coenzyme A)serine mark.

The protein belongs to the CitD family. In terms of assembly, oligomer with a subunit composition of (alpha,beta,gamma)6.

The protein resides in the cytoplasm. Covalent carrier of the coenzyme of citrate lyase. This chain is Citrate lyase acyl carrier protein, found in Streptococcus pyogenes serotype M2 (strain MGAS10270).